We begin with the raw amino-acid sequence, 343 residues long: 3-dehydroquinate synthase (343 aa).

Residues 61–66 (SGEKYK), 95–96 (GV), 119–120 (TT), K132, K141, N142, and 159–162 (FLKT) contribute to the NAD(+) site. 3 residues coordinate Zn(2+): E174, H231, and H248.

This sequence belongs to the sugar phosphate cyclases superfamily. Dehydroquinate synthase family. Homodimer. NAD(+) is required as a cofactor. Requires Co(2+) as cofactor. It depends on Zn(2+) as a cofactor.

It is found in the cytoplasm. The catalysed reaction is 7-phospho-2-dehydro-3-deoxy-D-arabino-heptonate = 3-dehydroquinate + phosphate. The protein operates within metabolic intermediate biosynthesis; chorismate biosynthesis; chorismate from D-erythrose 4-phosphate and phosphoenolpyruvate: step 2/7. Functionally, catalyzes the conversion of 3-deoxy-D-arabino-heptulosonate 7-phosphate (DAHP) to dehydroquinate (DHQ). The chain is 3-dehydroquinate synthase from Helicobacter pylori (strain ATCC 700392 / 26695) (Campylobacter pylori).